The sequence spans 133 residues: MAAASISAIGCNQTLIGTSFYGGWGSSISGEDYQTMLSKTVAPPQQARVSRKAIRAVPMMKNVNEGKGLFAPLVVVTRNLVGKKRFNQLRGKAIALHSQVITEFCKSIGADAKQRQGLIRLAKKNGERLGFLA.

A chloroplast-targeting transit peptide spans 1–60 (MAAASISAIGCNQTLIGTSFYGGWGSSISGEDYQTMLSKTVAPPQQARVSRKAIRAVPMM).

The protein belongs to the PGR5 family. As to quaternary structure, interacts with PGRL1A and PGRL1B. Disulfide bonds; Cys-11 and Cys-105 are probably involved in the formation of disulfide bridges with 'Cys-300' and 'Cys-303' of PGRL1A. 'Cys-272' and 'Cys-275' of PGRL1A may also be used to form the disulfide bridges, but in this case the cyclic electron flow is lost.

It is found in the plastid. The protein resides in the chloroplast thylakoid membrane. Functionally, critical for growth under fluctuating-light conditions. Involved in the regulation of the cyclic electron flow (CEF) around Photosystem I. Essential for the reduction of PGRL1A by ferredoxin and for photoprotection. Contributes to maximize photosynthesis efficiency after a long dark adaptation via the regulation of non-photochemical quenching (NPQ); acts independently from DLDG1. Promotes the induction of steady-state proton motive force (pmf) and energy-dependent quenching (qE). The protein is Protein PROTON GRADIENT REGULATION 5, chloroplastic of Arabidopsis thaliana (Mouse-ear cress).